Reading from the N-terminus, the 148-residue chain is Large ribosomal subunit protein bL9 (148 aa).

Belongs to the bacterial ribosomal protein bL9 family.

Its function is as follows. Binds to the 23S rRNA. The protein is Large ribosomal subunit protein bL9 of Campylobacter concisus (strain 13826).